The primary structure comprises 3106 residues: Cilia- and flagella-associated protein 54 (3106 aa).

Low complexity-rich tracts occupy residues 1 to 24 (MASSRSSSSSSEESPDSETSVSPV), 34 to 48 (STAVLKSPSESKSSS), and 2356 to 2368 (ESCSPTSPETSTT). Disordered regions lie at residues 1–58 (MASS…THSE) and 2354–2374 (PEESCSPTSPETSTTESKDDS).

The protein belongs to the CFAP54 family. Expressed at high level in the testis and at a low level in the lung and brain.

The protein localises to the cytoplasm. It is found in the cytoskeleton. The protein resides in the cilium axoneme. Its function is as follows. Required for assembly and function of cilia and flagella. This is Cilia- and flagella-associated protein 54 from Mus musculus (Mouse).